A 75-amino-acid chain; its full sequence is MIRNFRRRKFCRFTLEKINNIDYKDIILLKNYITENGKIVPSRITGTRARYQRQLSRAVKRARYLSLLPYTDHHR.

This sequence belongs to the bacterial ribosomal protein bS18 family. In terms of assembly, part of the 30S ribosomal subunit. Forms a tight heterodimer with protein bS6.

Its function is as follows. Binds as a heterodimer with protein bS6 to the central domain of the 16S rRNA, where it helps stabilize the platform of the 30S subunit. The sequence is that of Small ribosomal subunit protein bS18 from Wigglesworthia glossinidia brevipalpis.